Here is a 248-residue protein sequence, read N- to C-terminus: Deoxyribose-phosphate aldolase (248 aa).

Aspartate 106 acts as the Proton donor/acceptor in catalysis. Lysine 168 acts as the Schiff-base intermediate with acetaldehyde in catalysis. Lysine 197 serves as the catalytic Proton donor/acceptor.

The protein belongs to the DeoC/FbaB aldolase family. DeoC type 1 subfamily.

The protein resides in the cytoplasm. It carries out the reaction 2-deoxy-D-ribose 5-phosphate = D-glyceraldehyde 3-phosphate + acetaldehyde. It functions in the pathway carbohydrate degradation; 2-deoxy-D-ribose 1-phosphate degradation; D-glyceraldehyde 3-phosphate and acetaldehyde from 2-deoxy-alpha-D-ribose 1-phosphate: step 2/2. Catalyzes a reversible aldol reaction between acetaldehyde and D-glyceraldehyde 3-phosphate to generate 2-deoxy-D-ribose 5-phosphate. This chain is Deoxyribose-phosphate aldolase, found in Rhizobium meliloti (strain 1021) (Ensifer meliloti).